We begin with the raw amino-acid sequence, 365 residues long: Aminomethyltransferase (365 aa).

It belongs to the GcvT family. The glycine cleavage system is composed of four proteins: P, T, L and H.

The catalysed reaction is N(6)-[(R)-S(8)-aminomethyldihydrolipoyl]-L-lysyl-[protein] + (6S)-5,6,7,8-tetrahydrofolate = N(6)-[(R)-dihydrolipoyl]-L-lysyl-[protein] + (6R)-5,10-methylene-5,6,7,8-tetrahydrofolate + NH4(+). Functionally, the glycine cleavage system catalyzes the degradation of glycine. The protein is Aminomethyltransferase of Geobacillus thermodenitrificans (strain NG80-2).